Reading from the N-terminus, the 1342-residue chain is DNA-directed RNA polymerase subunit beta (1342 aa).

The protein belongs to the RNA polymerase beta chain family. The RNAP catalytic core consists of 2 alpha, 1 beta, 1 beta' and 1 omega subunit. When a sigma factor is associated with the core the holoenzyme is formed, which can initiate transcription.

It carries out the reaction RNA(n) + a ribonucleoside 5'-triphosphate = RNA(n+1) + diphosphate. Its function is as follows. DNA-dependent RNA polymerase catalyzes the transcription of DNA into RNA using the four ribonucleoside triphosphates as substrates. This Sodalis glossinidius (strain morsitans) protein is DNA-directed RNA polymerase subunit beta.